Reading from the N-terminus, the 1372-residue chain is DNA-directed RNA polymerase subunit beta (1372 aa).

Belongs to the RNA polymerase beta chain family. In terms of assembly, the RNAP catalytic core consists of 2 alpha, 1 beta, 1 beta' and 1 omega subunit. When a sigma factor is associated with the core the holoenzyme is formed, which can initiate transcription.

It carries out the reaction RNA(n) + a ribonucleoside 5'-triphosphate = RNA(n+1) + diphosphate. Its function is as follows. DNA-dependent RNA polymerase catalyzes the transcription of DNA into RNA using the four ribonucleoside triphosphates as substrates. This is DNA-directed RNA polymerase subunit beta from Nitratidesulfovibrio vulgaris (strain ATCC 29579 / DSM 644 / CCUG 34227 / NCIMB 8303 / VKM B-1760 / Hildenborough) (Desulfovibrio vulgaris).